A 380-amino-acid polypeptide reads, in one-letter code: 3-dehydroquinate synthase (380 aa).

NAD(+)-binding positions include 100–104 (GAASD), 124–125 (TT), lysine 137, and lysine 146. Zn(2+) contacts are provided by glutamate 179, histidine 251, and histidine 267. The segment at 320–343 (YMQRDKKNMQSNDTDSDKDSREMP) is disordered.

This sequence belongs to the sugar phosphate cyclases superfamily. Dehydroquinate synthase family. Requires NAD(+) as cofactor. Co(2+) serves as cofactor. Zn(2+) is required as a cofactor.

It is found in the cytoplasm. The enzyme catalyses 7-phospho-2-dehydro-3-deoxy-D-arabino-heptonate = 3-dehydroquinate + phosphate. Its pathway is metabolic intermediate biosynthesis; chorismate biosynthesis; chorismate from D-erythrose 4-phosphate and phosphoenolpyruvate: step 2/7. Its function is as follows. Catalyzes the conversion of 3-deoxy-D-arabino-heptulosonate 7-phosphate (DAHP) to dehydroquinate (DHQ). The sequence is that of 3-dehydroquinate synthase from Tropheryma whipplei (strain Twist) (Whipple's bacillus).